Here is a 275-residue protein sequence, read N- to C-terminus: Putative pyruvate, phosphate dikinase regulatory protein (275 aa).

An ADP-binding site is contributed by 149-156 (GVSRTSKT).

It belongs to the pyruvate, phosphate/water dikinase regulatory protein family. PDRP subfamily.

The catalysed reaction is N(tele)-phospho-L-histidyl/L-threonyl-[pyruvate, phosphate dikinase] + ADP = N(tele)-phospho-L-histidyl/O-phospho-L-threonyl-[pyruvate, phosphate dikinase] + AMP + H(+). The enzyme catalyses N(tele)-phospho-L-histidyl/O-phospho-L-threonyl-[pyruvate, phosphate dikinase] + phosphate + H(+) = N(tele)-phospho-L-histidyl/L-threonyl-[pyruvate, phosphate dikinase] + diphosphate. In terms of biological role, bifunctional serine/threonine kinase and phosphorylase involved in the regulation of the pyruvate, phosphate dikinase (PPDK) by catalyzing its phosphorylation/dephosphorylation. This Levilactobacillus brevis (strain ATCC 367 / BCRC 12310 / CIP 105137 / JCM 1170 / LMG 11437 / NCIMB 947 / NCTC 947) (Lactobacillus brevis) protein is Putative pyruvate, phosphate dikinase regulatory protein.